We begin with the raw amino-acid sequence, 413 residues long: Phosphoglycerate kinase (413 aa).

Residues 19–21, Arg-34, 57–60, Arg-114, and Arg-154 contribute to the substrate site; these read DLN and HQSK. Residues Glu-332 and 358-361 each bind ATP; that span reads GGHS.

Belongs to the phosphoglycerate kinase family. As to quaternary structure, monomer.

It is found in the cytoplasm. It carries out the reaction (2R)-3-phosphoglycerate + ATP = (2R)-3-phospho-glyceroyl phosphate + ADP. Its pathway is carbohydrate degradation; glycolysis; pyruvate from D-glyceraldehyde 3-phosphate: step 2/5. This is Phosphoglycerate kinase from Thermococcus sibiricus (strain DSM 12597 / MM 739).